Here is a 569-residue protein sequence, read N- to C-terminus: Proline--tRNA ligase (569 aa).

It belongs to the class-II aminoacyl-tRNA synthetase family. ProS type 1 subfamily. In terms of assembly, homodimer.

It localises to the cytoplasm. The enzyme catalyses tRNA(Pro) + L-proline + ATP = L-prolyl-tRNA(Pro) + AMP + diphosphate. Catalyzes the attachment of proline to tRNA(Pro) in a two-step reaction: proline is first activated by ATP to form Pro-AMP and then transferred to the acceptor end of tRNA(Pro). As ProRS can inadvertently accommodate and process non-cognate amino acids such as alanine and cysteine, to avoid such errors it has two additional distinct editing activities against alanine. One activity is designated as 'pretransfer' editing and involves the tRNA(Pro)-independent hydrolysis of activated Ala-AMP. The other activity is designated 'posttransfer' editing and involves deacylation of mischarged Ala-tRNA(Pro). The misacylated Cys-tRNA(Pro) is not edited by ProRS. In Nitratiruptor sp. (strain SB155-2), this protein is Proline--tRNA ligase.